Here is a 208-residue protein sequence, read N- to C-terminus: dITP/XTP pyrophosphatase (208 aa).

Substrate is bound at residue 15-20 (SHNAGK). E47 and D76 together coordinate Mg(2+). The active-site Proton acceptor is the D76. Residues S77, 157–160 (HGYD), K180, and 185–186 (HR) each bind substrate.

This sequence belongs to the HAM1 NTPase family. As to quaternary structure, homodimer. Requires Mg(2+) as cofactor.

It catalyses the reaction XTP + H2O = XMP + diphosphate + H(+). It carries out the reaction dITP + H2O = dIMP + diphosphate + H(+). The catalysed reaction is ITP + H2O = IMP + diphosphate + H(+). In terms of biological role, pyrophosphatase that catalyzes the hydrolysis of nucleoside triphosphates to their monophosphate derivatives, with a high preference for the non-canonical purine nucleotides XTP (xanthosine triphosphate), dITP (deoxyinosine triphosphate) and ITP. Seems to function as a house-cleaning enzyme that removes non-canonical purine nucleotides from the nucleotide pool, thus preventing their incorporation into DNA/RNA and avoiding chromosomal lesions. The sequence is that of dITP/XTP pyrophosphatase from Gluconobacter oxydans (strain 621H) (Gluconobacter suboxydans).